A 500-amino-acid polypeptide reads, in one-letter code: NAD(P)H-quinone oxidoreductase chain 4, chloroplastic (500 aa).

Helical transmembrane passes span 4–24, 35–55, 87–107, 113–130, 134–154, 167–187, 211–231, 242–262, 272–292, 305–325, 330–350, 386–406, 416–436, and 462–482; these read FPWLTIIVVFPISAGSLMLFL, YTICICILELLLTTYAFCYNF, IGTILLTGFITTLATLAAFPV, FFHFLMLAMYSGQIGSFS, LLLFFIMWELELIPVYLLLSM, FILYTAGSSIFLLIGVLGISL, ILFYIGFLIAFAVKSPIIPLH, HYSTCMLLAGILLKMGAYGLV, AHSMFSPWLLVVGTIQIIYAA, IAYSSVSHMGFIIIGISSITD, GAILQIISHGFIGAALFFLAG, LALPGMSGFIAEFIVFFGIIT, IFIIFVMAIGMILTPIYLLSM, and LFLSISILLPIIGIGIYPDFV.

It belongs to the complex I subunit 4 family.

It is found in the plastid. The protein resides in the chloroplast thylakoid membrane. The enzyme catalyses a plastoquinone + NADH + (n+1) H(+)(in) = a plastoquinol + NAD(+) + n H(+)(out). It carries out the reaction a plastoquinone + NADPH + (n+1) H(+)(in) = a plastoquinol + NADP(+) + n H(+)(out). This Arabidopsis thaliana (Mouse-ear cress) protein is NAD(P)H-quinone oxidoreductase chain 4, chloroplastic (ndhD).